A 446-amino-acid chain; its full sequence is NADH-quinone oxidoreductase subunit D (446 aa).

This sequence belongs to the complex I 49 kDa subunit family. NDH-1 is composed of 14 different subunits. Subunits NuoB, C, D, E, F, and G constitute the peripheral sector of the complex.

The protein resides in the cell membrane. The enzyme catalyses a quinone + NADH + 5 H(+)(in) = a quinol + NAD(+) + 4 H(+)(out). In terms of biological role, NDH-1 shuttles electrons from NADH, via FMN and iron-sulfur (Fe-S) centers, to quinones in the respiratory chain. The immediate electron acceptor for the enzyme in this species is believed to be a menaquinone. Couples the redox reaction to proton translocation (for every two electrons transferred, four hydrogen ions are translocated across the cytoplasmic membrane), and thus conserves the redox energy in a proton gradient. The chain is NADH-quinone oxidoreductase subunit D from Mycobacterium sp. (strain JLS).